The following is a 267-amino-acid chain: Undecaprenyl-diphosphatase (267 aa).

7 helical membrane passes run 39–59 (PGLA…IWYF), 87–107 (VLYL…LNDL), 112–132 (FRSP…LWAV), 145–165 (VTLR…VPGV), 183–203 (PSVA…AVIV), 216–236 (LPLL…ISVL), and 244–264 (SFGV…ATLA).

It belongs to the UppP family.

Its subcellular location is the cell inner membrane. The enzyme catalyses di-trans,octa-cis-undecaprenyl diphosphate + H2O = di-trans,octa-cis-undecaprenyl phosphate + phosphate + H(+). Functionally, catalyzes the dephosphorylation of undecaprenyl diphosphate (UPP). Confers resistance to bacitracin. This chain is Undecaprenyl-diphosphatase, found in Gemmatimonas aurantiaca (strain DSM 14586 / JCM 11422 / NBRC 100505 / T-27).